Here is a 518-residue protein sequence, read N- to C-terminus: Equilibrative nucleoside transporter 4 (518 aa).

Over residues 1-10 (MGSKGAERRK) the composition is skewed to basic and acidic residues. A disordered region spans residues 1–21 (MGSKGAERRKQATPGQTPEGN). Topologically, residues 1-66 (MGSKGAERRK…EEAVPDDRYH (66 aa)) are extracellular. The helical transmembrane segment at 67-87 (GIYFAMLLAGVGFLLPYNSFI) threads the bilayer. The Cytoplasmic portion of the chain corresponds to 88-99 (TDVDYLHHKFEG). The chain crosses the membrane as a helical span at residues 100–120 (TSIVFDMGLTYILVALVAVIL). The Extracellular segment spans residues 121–133 (NNVLVEMLSLHTR). Residues 134–154 (ITVGYLFALGPLLFVTIFDVW) form a helical membrane-spanning segment. Over 155–157 (LER) the chain is Cytoplasmic. The helical transmembrane segment at 158 to 178 (FTIKQAYVINLMSMGTVAFGC) threads the bilayer. Residues 179–198 (TVQQSSFYGYMGMLPKRYTQ) lie on the Extracellular side of the membrane. A helical membrane pass occupies residues 199–218 (GVMTGESTAGVIISLSRIFT). Topologically, residues 219–229 (KLLIKDERKNT) are cytoplasmic. A helical transmembrane segment spans residues 230-250 (IIFFVISICMVLVCFILHLLV). The Extracellular segment spans residues 251 to 342 (RRTRFVQYYT…MILHRYVVAR (92 aa)). Residues 343–363 (VIWTYMLSIAVTYFITLCLFP) traverse the membrane as a helical segment. The Cytoplasmic portion of the chain corresponds to 364–376 (GLESEIKNATLGE). Residues 377-397 (WLPILIMAIFNISDFVGKILA) traverse the membrane as a helical segment. Topologically, residues 398-407 (AVPYEWNGTR) are extracellular. Residues 408 to 428 (LLFFSCVRVVFIPLFIMCVYP) traverse the membrane as a helical segment. At 429-439 (AQMPMFSHPAW) the chain is on the cytoplasmic side. Residues 440–460 (PCIFSLFMGITNGYFGSVPMI) form a helical membrane-spanning segment. The Extracellular portion of the chain corresponds to 461-476 (HAAGKVAPEQRELAGN). Residues 477–497 (IMTVSYMSGLMLGSVVAYAAY) form a helical membrane-spanning segment. Residues 498 to 518 (SFTASGSSFHSQTGYNFTQGY) lie on the Cytoplasmic side of the membrane.

This sequence belongs to the SLC29A/ENT transporter (TC 2.A.57) family.

It localises to the membrane. Its function is as follows. Functions as a polyspecific organic cation transporter, efficiently transporting many organic cations such as monoamine neurotransmitters 1-methyl-4-phenylpyridinium and biogenic amines including serotonin, dopamine, norepinephrine and epinephrine. May play a role in regulating central nervous system homeostasis of monoamine neurotransmitters. May be involved in luminal transport of organic cations in the kidney and seems to use luminal proton gradient to drive organic cation reabsorption. Does not seem to transport nucleoside and nucleoside analogs such as uridine, cytidine, thymidine, adenosine, inosine, guanosine, and azidothymidine. The polypeptide is Equilibrative nucleoside transporter 4 (slc29a4) (Danio rerio (Zebrafish)).